The primary structure comprises 295 residues: uncharacterized protein (295 aa).

This is an uncharacterized protein from Xanthobacter autotrophicus.